Consider the following 225-residue polypeptide: MYQQNSETGSLGRVVKGSWSDEEDDLLRKCIQKYGEGNWKRVPERAGLNRCRKSCRWRWLNYLKPSIKRGHFNEDEVKFIIQQHKLLGNRWSLIAAKLPGRTINDVKNYCNTHLYKKHSIENIPAPATNTMTHNTSSCVDRPESSATIKEPKWWENILVELQREEKEGKSQNCSGLDFEQDNLGQQDPNINDGMDQWLNSLKEVPNLSYQWEENLLDFDVVNLWA.

HTH myb-type domains follow at residues 11–67 (LGRV…KPSI) and 68–118 (KRGH…YKKH). 2 consecutive DNA-binding regions (H-T-H motif) follow at residues 39 to 63 (WKRV…LNYL) and 91 to 114 (WSLI…NTHL).

No interactions with bHLH.

The protein localises to the nucleus. Activates DODA1 and CYP76AD1 in the betalain red pigment pathway. This chain is Transcription factor MYB1, found in Beta vulgaris (Sugar beet).